The sequence spans 469 residues: Ribulose bisphosphate carboxylase large chain (469 aa).

An N6,N6,N6-trimethyllysine modification is found at lysine 7. Substrate is bound by residues asparagine 116 and threonine 166. Lysine 168 (proton acceptor) is an active-site residue. Lysine 170 lines the substrate pocket. Residues lysine 194, aspartate 196, and glutamate 197 each contribute to the Mg(2+) site. N6-carboxylysine is present on lysine 194. Histidine 287 acts as the Proton acceptor in catalysis. Substrate-binding residues include arginine 288, histidine 320, and serine 372.

It belongs to the RuBisCO large chain family. Type I subfamily. As to quaternary structure, heterohexadecamer of 8 large chains and 8 small chains; disulfide-linked. The disulfide link is formed within the large subunit homodimers. It depends on Mg(2+) as a cofactor. Post-translationally, the disulfide bond which can form in the large chain dimeric partners within the hexadecamer appears to be associated with oxidative stress and protein turnover.

Its subcellular location is the plastid. It is found in the chloroplast. It catalyses the reaction 2 (2R)-3-phosphoglycerate + 2 H(+) = D-ribulose 1,5-bisphosphate + CO2 + H2O. The catalysed reaction is D-ribulose 1,5-bisphosphate + O2 = 2-phosphoglycolate + (2R)-3-phosphoglycerate + 2 H(+). Its function is as follows. RuBisCO catalyzes two reactions: the carboxylation of D-ribulose 1,5-bisphosphate, the primary event in carbon dioxide fixation, as well as the oxidative fragmentation of the pentose substrate in the photorespiration process. Both reactions occur simultaneously and in competition at the same active site. This Pachira aquatica (Guiana chestnut) protein is Ribulose bisphosphate carboxylase large chain.